We begin with the raw amino-acid sequence, 466 residues long: Putative outer membrane protein NMB0088 (466 aa).

A signal peptide spans 1–24; that stretch reads MTPSALKKTVLLLGTAFAAASVHA.

This sequence belongs to the OmpP1/FadL family.

The protein resides in the cell outer membrane. This is Putative outer membrane protein NMB0088 from Neisseria meningitidis serogroup B (strain ATCC BAA-335 / MC58).